Reading from the N-terminus, the 305-residue chain is Calponin-2 (305 aa).

Ser-2 carries the post-translational modification N-acetylserine. N6-acetyllysine occurs at positions 8 and 25. One can recognise a Calponin-homology (CH) domain in the interval 28 to 132 (PQKEAELRSW…SLLALAGKAK (105 aa)). Residue Ser-138 is modified to Phosphoserine. Calponin-like repeat units lie at residues 166 to 191 (IGLQMGTNKCASQSGMTAYGTRRHLY), 206 to 231 (ISLQMGTNKCASQVGMTAPGTRRHIY), and 245 to 269 (MSLQMGYTQGANQSGQVFGLGRQIY).

This sequence belongs to the calponin family. In terms of tissue distribution, smooth muscle, and tissues containing significant amounts of smooth muscle.

In terms of biological role, thin filament-associated protein that is implicated in the regulation and modulation of smooth muscle contraction. It is capable of binding to actin, calmodulin and tropomyosin. The interaction of calponin with actin inhibits the actomyosin Mg-ATPase activity. The sequence is that of Calponin-2 (Cnn2) from Mus musculus (Mouse).